The primary structure comprises 56 residues: Large ribosomal subunit protein bL32 (56 aa).

The segment at 1-26 (MAVQQNKKSRSKRGMRRSHDALSTAQ) is disordered. Residues 7–16 (KKSRSKRGMR) show a composition bias toward basic residues.

This sequence belongs to the bacterial ribosomal protein bL32 family.

In Shewanella baltica (strain OS155 / ATCC BAA-1091), this protein is Large ribosomal subunit protein bL32.